A 381-amino-acid chain; its full sequence is Homoserine O-succinyltransferase (381 aa).

An AB hydrolase-1 domain is found at 45-360 (NAVLVCHALN…PHGHDAFLLD (316 aa)). Serine 151 serves as the catalytic Nucleophile. Position 221 (arginine 221) interacts with substrate. Active-site residues include aspartate 321 and histidine 354. Substrate is bound at residue aspartate 355.

The protein belongs to the AB hydrolase superfamily. MetX family. In terms of assembly, homodimer.

The protein localises to the cytoplasm. The enzyme catalyses L-homoserine + succinyl-CoA = O-succinyl-L-homoserine + CoA. Its pathway is amino-acid biosynthesis; L-methionine biosynthesis via de novo pathway; O-succinyl-L-homoserine from L-homoserine: step 1/1. Transfers a succinyl group from succinyl-CoA to L-homoserine, forming succinyl-L-homoserine. The chain is Homoserine O-succinyltransferase from Burkholderia vietnamiensis (strain G4 / LMG 22486) (Burkholderia cepacia (strain R1808)).